A 300-amino-acid polypeptide reads, in one-letter code: Cation-efflux pump FieF (300 aa).

The next 4 membrane-spanning stretches (helical) occupy residues 11–31 (LAAVSATAVALVLFIMKVFAW), 40–60 (LASLVDSLVDIAASLVNLLVV), 81–101 (LAALAQSMFISGSALFLILTG), and 114–134 (PEVGMWVTLIALVATLLLVSF). Asp-45 and Asp-49 together coordinate Zn(2+). Zn(2+) contacts are provided by His-153 and Asp-157. The next 2 membrane-spanning stretches (helical) occupy residues 156-176 (SDLLMNGAILVALALSWKGIT) and 182-202 (FALGIGGYILYSALRMGYDAV).

It belongs to the cation diffusion facilitator (CDF) transporter (TC 2.A.4) family. FieF subfamily. In terms of assembly, homodimer.

It localises to the cell inner membrane. It carries out the reaction Zn(2+)(in) + H(+)(out) = Zn(2+)(out) + H(+)(in). The catalysed reaction is Cd(2+)(in) + H(+)(out) = Cd(2+)(out) + H(+)(in). It catalyses the reaction Fe(2+)(in) + H(+)(out) = Fe(2+)(out) + H(+)(in). Its function is as follows. Divalent metal cation transporter which exports Zn(2+), Cd(2+) and possibly Fe(2+). May be involved in zinc and iron detoxification by efflux. The polypeptide is Cation-efflux pump FieF (Pectobacterium carotovorum subsp. carotovorum (strain PC1)).